The following is a 309-amino-acid chain: Zinc transporter ZIPB (309 aa).

Over 1 to 22 (MNQPSSLAADLRGAWHAQAQSH) the chain is Periplasmic. Residues 23 to 50 (PLITLGLAASAAGVVLLLVAGIVNALTG) form a helical membrane-spanning segment. The Extracellular segment spans residues 51–55 (ENRVH). Residues 56-81 (VGYAVLGGAAGFAATALGALMALGLR) traverse the membrane as a helical segment. Topologically, residues 82–83 (AI) are periplasmic. A helical transmembrane segment spans residues 84–119 (SARTQDAMLGFAAGMMLAASAFSLILPGLDAAGTIV). A Zn(2+)-binding site is contributed by aspartate 89. A Cd(2+)-binding site is contributed by methionine 99. Residues 120–121 (GP) are Extracellular-facing. The chain crosses the membrane as a helical span at residues 122 to 145 (GPAAAAVVALGLGLGVLLMLGLDY). Aspartate 144 provides a ligand contact to Zn(2+). Aspartate 144 contacts Cd(2+). Over 146-165 (FTPHEHERTGHQGPEAARVN) the chain is Periplasmic. The chain crosses the membrane as a helical span at residues 166–190 (RVWLFVLTIILHNLPEGMAIGVSFA). Residue histidine 177 coordinates Zn(2+). Histidine 177, asparagine 178, and glutamate 181 together coordinate Cd(2+). Glutamate 181 lines the Zn(2+) pocket. The Extracellular portion of the chain corresponds to 191–192 (TG). A helical transmembrane segment spans residues 193–222 (DLRIGLPLTSAIAIQDVPEGLAVALALRAV). Glutamine 207 serves as a coordination point for Zn(2+). Cd(2+)-binding residues include glutamine 207, aspartate 208, and glutamate 211. A Zn(2+)-binding site is contributed by glutamate 211. At 223–224 (GL) the chain is on the periplasmic side. A helical transmembrane segment spans residues 225 to 251 (PIGRAVLVAVASGLMEPLGALVGVGIS). Position 240 (glutamate 240) interacts with Cd(2+). Topologically, residues 252-255 (SGFA) are extracellular. Residues 256–275 (LAYPISMGLAAGAMIFVVSH) traverse the membrane as a helical segment. Residues histidine 275, glutamate 276, and histidine 286 each coordinate Zn(2+). Histidine 275 contributes to the Cd(2+) binding site. At 276-287 (EVIPETHRNGHE) the chain is on the periplasmic side. Residues 288–308 (TTATVGLMAGFALMMFLDTAL) form a helical membrane-spanning segment. A topological domain (extracellular) is located at residue glycine 309.

It belongs to the ZIP transporter (TC 2.A.5) family. As to quaternary structure, homodimer. Also exists as a monomer.

The protein resides in the cell inner membrane. The catalysed reaction is Zn(2+)(in) = Zn(2+)(out). It catalyses the reaction Cd(2+)(in) = Cd(2+)(out). In terms of biological role, selective electrodiffusional channel that mediates the uptake of Zn(2+). Exploits in vivo zinc concentration gradients (maintained by cellular zinc homeostasis) to passively move zinc ions into the cytoplasm. ZIPB-mediated zinc flux is dependent upon pH, but independent of the proton motive force. Is also able to import Cd(2+), but is not permeable to Co(2+), Cu(2+), Fe(2+), Mn(2+) and Ni(2+). This Bordetella bronchiseptica (strain ATCC BAA-588 / NCTC 13252 / RB50) (Alcaligenes bronchisepticus) protein is Zinc transporter ZIPB.